The primary structure comprises 77 residues: MSQKSYIVQLKDSVDPASMDKIKSDLEASGAKIGHTYDTVFKGFSVSLPENAVDALSAHPEIQHFEPDQEMHTMKKD.

The 70-residue stretch at 5–74 (SYIVQLKDSV…FEPDQEMHTM (70 aa)) folds into the Inhibitor I9 domain.

The protein belongs to the protease inhibitor I9 family.

Its subcellular location is the cytoplasm. It localises to the nucleus. This is an uncharacterized protein from Schizosaccharomyces pombe (strain 972 / ATCC 24843) (Fission yeast).